Here is a 63-residue protein sequence, read N- to C-terminus: Large ribosomal subunit protein bL28 (63 aa).

The protein belongs to the bacterial ribosomal protein bL28 family.

The sequence is that of Large ribosomal subunit protein bL28 from Acidobacterium capsulatum (strain ATCC 51196 / DSM 11244 / BCRC 80197 / JCM 7670 / NBRC 15755 / NCIMB 13165 / 161).